The chain runs to 196 residues: CASP-like protein 1D1 (196 aa).

Residues Met-1–Pro-18 show a composition bias toward basic and acidic residues. The segment at Met-1–Pro-22 is disordered. Residues Met-1–Ser-29 lie on the Cytoplasmic side of the membrane. A helical membrane pass occupies residues Val-30–Val-50. Over Thr-51 to Ser-84 the chain is Extracellular. Residues Ala-85–Leu-105 form a helical membrane-spanning segment. The Cytoplasmic segment spans residues Lys-106 to Arg-112. Residues Phe-113–Gly-133 form a helical membrane-spanning segment. The Extracellular segment spans residues Ala-134–Ser-167. Residues Ser-168–Phe-188 form a helical membrane-spanning segment. Over Ser-189 to Lys-196 the chain is Cytoplasmic.

Belongs to the Casparian strip membrane proteins (CASP) family. Homodimer and heterodimers.

The protein resides in the cell membrane. The sequence is that of CASP-like protein 1D1 from Populus trichocarpa (Western balsam poplar).